The following is a 541-amino-acid chain: MEGERMNAFPSTMMDEELNLWDFLERAAALFGRKEVVSRLHTGEVHRTTYAEVYQRARRLMGGLRALGVGVGDRVATLGFNHFRHLEAYFAVPGMGAVLHTANPRLSPKEIAYILNHAEDKVLLFDPNLLPLVEAIRGELKTVQHFVVMDEKAPEGYLAYEEALGEEADPVRVPERAACGMAYTTGTTGLPKGVVYSHRALVLHSLAASLVDGTALSEKDVVLPVVPMFHVNAWCLPYAATLVGAKQVLPGPRLDPASLVELFDGEGVTFTAGVPTVWLALADYLESTGHRLKTLRRLVVGGSAAPRSLIARFERMGVEVRQGYGLTETSPVVVQNFVKSHLESLSEEEKLTLKAKTGLPIPLVRLRVADEEGRPVPKDGKALGEVQLKGPWITGGYYGNEEATRSALTPDGFFRTGDIAVWDEEGYVEIKDRLKDLIKSGGEWISSVDLENALMGHPKVKEAAVVAIPHPKWQERPLAVVVPRGEKPTPEELNEHLLKAGFAKWQLPDAYVFAEEIPRTSAGKFLKRALREQYKNYYGGA.

Mg(2+) is bound at residue Thr184. Positions 231 and 234 each coordinate ATP. Residues Gly302, Gln322, Gly323, and Thr327 each contribute to the tetradecanoyl-AMP site. ATP contacts are provided by Gly323 and Thr327. Residue Glu328 participates in Mg(2+) binding. Residues Asp418, Lys435, Lys439, and Trp444 each contribute to the ATP site. Positions 418, 435, and 439 each coordinate tetradecanoyl-AMP.

It belongs to the ATP-dependent AMP-binding enzyme family. Forms a domain swapped homodimer. Mg(2+) serves as cofactor.

It carries out the reaction a long-chain fatty acid + ATP + CoA = a long-chain fatty acyl-CoA + AMP + diphosphate. It catalyses the reaction tetradecanoate + ATP + CoA = tetradecanoyl-CoA + AMP + diphosphate. The enzyme catalyses hexadecanoate + ATP + CoA = hexadecanoyl-CoA + AMP + diphosphate. The protein operates within lipid metabolism; fatty acid metabolism. Its function is as follows. Catalyzes the esterification of a number of long chain fatty acids with CoA, resulting in the formation of long-chain fatty acyl-CoA. Myristate (C14) is the most efficiently processed fatty acid, followed by palmitate (C16). Also catalyzes the esterification of stearate (C18) and laurate (C12), but at lower efficiency. Does not catalyze the esterification of the unsaturated fatty acids mysteroleic and palmitoleic acids in vitro. In Thermus thermophilus (strain ATCC 27634 / DSM 579 / HB8), this protein is Long-chain-fatty-acid--CoA ligase.